The primary structure comprises 570 residues: Multidrug and toxin extrusion protein 1 (570 aa).

Residue Met-1 is modified to N-acetylmethionine. At Met-1 to Ala-37 the chain is on the cytoplasmic side. A helical transmembrane segment spans residues Leu-38–Ile-58. The Extracellular portion of the chain corresponds to Ser-59–Asp-72. A helical transmembrane segment spans residues Ala-73–Ser-93. Topologically, residues Ser-94 to Leu-123 are cytoplasmic. Residues Leu-124–Phe-144 traverse the membrane as a helical segment. Residues Arg-145–Arg-152 are Extracellular-facing. Residues Leu-153 to Leu-173 form a helical membrane-spanning segment. The Cytoplasmic portion of the chain corresponds to Gln-174–Lys-176. Residues Tyr-177–Val-197 form a helical membrane-spanning segment. Residues Asn-198–Ser-216 lie on the Extracellular side of the membrane. The chain crosses the membrane as a helical span at residues Ala-217 to Gly-237. Over Lys-238–Trp-256 the chain is Cytoplasmic. A helical transmembrane segment spans residues Ala-257–Ala-276. Residues Tyr-277 to Gln-295 are Extracellular-facing. A helical membrane pass occupies residues Ser-296–Ala-316. The Cytoplasmic segment spans residues Ser-317 to Ser-336. The helical transmembrane segment at Thr-337–Cys-357 threads the bilayer. At Lys-358 to Asp-370 the chain is on the extracellular side. Residues Ile-371–Leu-391 traverse the membrane as a helical segment. Over Ala-392 to Gly-408 the chain is Cytoplasmic. The chain crosses the membrane as a helical span at residues Ala-409 to Phe-429. Residues Ala-430–Gly-437 lie on the Extracellular side of the membrane. Residues Leu-438–Ile-458 traverse the membrane as a helical segment. Residues Gln-459–Arg-546 lie on the Cytoplasmic side of the membrane. The disordered stretch occupies residues Asp-508–Gly-534. The segment covering Met-521–Asp-533 has biased composition (basic and acidic residues). The chain crosses the membrane as a helical span at residues Gly-547–Val-567. Over Arg-568–Gln-570 the chain is Extracellular.

Belongs to the multi antimicrobial extrusion (MATE) (TC 2.A.66.1) family. Widely expressed. The highest expression is found in adrenal gland, and to a lower extent in liver, skeletal muscle and kidney. In testis, primarily localized throughout the adluminal compartment of the seminiferous tubules with expression at the peritubular myoid cells and Leydig cells.

It localises to the cell membrane. The protein localises to the apical cell membrane. It catalyses the reaction thiamine(out) + H(+)(in) = thiamine(in) + H(+)(out). The enzyme catalyses estrone 3-sulfate(in) + H(+)(out) = estrone 3-sulfate(out) + H(+)(in). It carries out the reaction creatinine(in) + H(+)(out) = creatinine(out) + H(+)(in). The catalysed reaction is agmatine(in) + H(+)(out) = agmatine(out) + H(+)(in). Its function is as follows. Multidrug efflux pump that functions as a H(+)/organic cation antiporter. Plays a physiological role in the excretion of cationic compounds including endogenous metabolites, drugs, toxins through the kidney and liver, into urine and bile respectively. Mediates the efflux of endogenous compounds such as creatinine, vitamin B1/thiamine, agmatine and estrone-3-sulfate. May also contribute to regulate the transport of cationic compounds in testis across the blood-testis-barrier. The sequence is that of Multidrug and toxin extrusion protein 1 from Homo sapiens (Human).